Consider the following 331-residue polypeptide: GTP 3',8-cyclase (331 aa).

Residues 6–234 (PFNRKIDYLR…PATGKSHDGP (229 aa)) form the Radical SAM core domain. A GTP-binding site is contributed by Arg-15. [4Fe-4S] cluster-binding residues include Cys-22 and Cys-26. Tyr-28 lines the S-adenosyl-L-methionine pocket. Cys-29 contacts [4Fe-4S] cluster. Arg-66 provides a ligand contact to GTP. Gly-70 serves as a coordination point for S-adenosyl-L-methionine. Ser-97 contributes to the GTP binding site. S-adenosyl-L-methionine is bound at residue Ser-121. Position 158 (Lys-158) interacts with GTP. Met-192 lines the S-adenosyl-L-methionine pocket. Cys-258 and Cys-261 together coordinate [4Fe-4S] cluster. 263-265 (RVR) contributes to the GTP binding site. Cys-275 is a binding site for [4Fe-4S] cluster.

It belongs to the radical SAM superfamily. MoaA family. In terms of assembly, monomer and homodimer. [4Fe-4S] cluster serves as cofactor.

It catalyses the reaction GTP + AH2 + S-adenosyl-L-methionine = (8S)-3',8-cyclo-7,8-dihydroguanosine 5'-triphosphate + 5'-deoxyadenosine + L-methionine + A + H(+). The protein operates within cofactor biosynthesis; molybdopterin biosynthesis. Catalyzes the cyclization of GTP to (8S)-3',8-cyclo-7,8-dihydroguanosine 5'-triphosphate. The protein is GTP 3',8-cyclase of Hydrogenovibrio crunogenus (strain DSM 25203 / XCL-2) (Thiomicrospira crunogena).